Reading from the N-terminus, the 1257-residue chain is Neural cell adhesion molecule L1 (1257 aa).

The first 19 residues, 1 to 19, serve as a signal peptide directing secretion; the sequence is MVVALRYVWPLLLCSPCLL. Residues 20–1120 are Extracellular-facing; it reads IQIPEEYEGH…RLPPAGFATE (1101 aa). Ig-like C2-type domains lie at 35–125, 139–226, 240–328, 333–420, 425–507, and 518–607; these read PVIT…TAMS, PKET…EPID, PRLL…YYVT, PYWL…AYIY, PAKI…NNVT, and TQIT…AQLL. Disulfide bonds link C57–C114 and C158–C209. N-linked (GlcNAc...) asparagine glycosylation is found at N100, N203, N247, and N294. Disulfide bonds link C264–C312 and C354–C404. N-linked (GlcNAc...) asparagine glycosylation is found at N433, N479, N490, and N505. A disulfide bridge links C448 with C497. An intrachain disulfide couples C539 to C591. A Cell attachment site motif is present at residues 554–556; it reads RGD. Residues N588 and N671 are each glycosylated (N-linked (GlcNAc...) asparagine). 5 consecutive Fibronectin type-III domains span residues 615–712, 717–810, 814–916, 920–1015, and 1016–1115; these read VPRL…TPEA, NPVD…SGED, AIPE…TPEG, HPEA…MALS, and GISD…LPPA. The tract at residues 698-725 is disordered; sequence GEPSPVSETVVTPEAAPEKNPVDVKGEG. A compositionally biased stretch (basic and acidic residues) spans 713-725; it reads APEKNPVDVKGEG. 10 N-linked (GlcNAc...) asparagine glycosylation sites follow: N726, N777, N825, N849, N876, N979, N1022, N1030, N1071, and N1105. Residues 1121-1143 form a helical membrane-spanning segment; that stretch reads GWFIGFVSAIILLLLVLLILCFI. The Cytoplasmic segment spans residues 1144-1257; the sequence is KRSKGGKYSV…SPINPAVALE (114 aa). Phosphoserine occurs at positions 1163, 1172, 1177, and 1178. Over residues 1176 to 1187 the composition is skewed to basic and acidic residues; sequence YRSLESDNEEKA. 2 disordered regions span residues 1176–1207 and 1226–1257; these read YRSL…SDDS and IGQY…VALE. Residue S1181 is modified to Phosphoserine; by CaMK2. Residues S1194, S1243, S1244, and S1248 each carry the phosphoserine modification. Polar residues predominate over residues 1241-1250; that stretch reads NDSSGATSPI.

This sequence belongs to the immunoglobulin superfamily. L1/neurofascin/NgCAM family. As to quaternary structure, interacts with SHTN1; the interaction occurs in axonal growth cones. Interacts with isoform 2 of BSG.

It is found in the cell membrane. The protein resides in the cell projection. Its subcellular location is the growth cone. The protein localises to the axon. It localises to the dendrite. Functionally, neural cell adhesion molecule involved in the dynamics of cell adhesion and in the generation of transmembrane signals at tyrosine kinase receptors. During brain development, critical in multiple processes, including neuronal migration, axonal growth and fasciculation, and synaptogenesis. In the mature brain, plays a role in the dynamics of neuronal structure and function, including synaptic plasticity. The sequence is that of Neural cell adhesion molecule L1 (L1CAM) from Homo sapiens (Human).